Here is a 766-residue protein sequence, read N- to C-terminus: Leucine-rich repeat and fibronectin type III domain-containing protein 1 (766 aa).

An N-terminal signal peptide occupies residues 1 to 31; it reads MAPGPFSSGLLSPPPAALPFLLLLWAGASRG. Residues 32–65 enclose the LRRNT domain; that stretch reads QPCPGRCICQNVAPTLTMLCAKTGLLFVPPAIDR. Residues 32-536 are Extracellular-facing; sequence QPCPGRCICQ…LRAHFLGGTM (505 aa). LRR repeat units follow at residues 66–87, 90–111, 114–135, 138–159, 163–184, 187–208, and 211–232; these read RVVELRLTDNFIAAVRRRDFAN, SLVHLTLSRNTIGQVAAGAFAD, ALRALHLDSNRLAEVRGDQLRG, NLRHLILGNNQIRKVESAAFDA, TVEDLDLSYNNLEALPWEAVGQ, NLNTLTLDHNLIDHIAEGTFVQ, and KLVRLDMTSNRLHKLPPDGLFL. N-linked (GlcNAc...) asparagine glycosylation is present at asparagine 87. In terms of domain architecture, LRRCT spans 252 to 298; it reads NPLHCNCELLWLRRLTREDDLETCATPEHLTDRYFWSIPEEEFLCEP. The 88-residue stretch at 299–386 folds into the Ig-like domain; the sequence is PLITRQAGGR…GEATAPVEVC (88 aa). The cysteines at positions 321 and 370 are disulfide-linked. Asparagine 343 carries N-linked (GlcNAc...) asparagine glycosylation. Residues 397-422 form a disordered region; it reads PAAPPPLTEPGSSDIATPGRPGANDS. The 97-residue stretch at 424-520 folds into the Fibronectin type-III domain; it reads TERRLVAAEL…GCVQFTTAGD (97 aa). A helical membrane pass occupies residues 537–557; sequence IIAIGGVIVASVLVFIVLLMI. Residues 558–766 lie on the Cytoplasmic side of the membrane; sequence RYKVYGDGDS…STEWMLESTV (209 aa). Disordered regions lie at residues 568–601 and 646–742; these read RRIKGTSRSPPRVSHVCSQTNGSSAQQASAPPAP and CLLP…GEDG. Phosphoserine is present on serine 713. Positions 714-727 are enriched in basic residues; that stretch reads YPRRARRTKRHRST.

Belongs to the LRFN family. In terms of assembly, forms heteromeric complexes with LRFN2, LRFN4 and LRFN5; binding to LRFN2 and LRFN5 may be weaker than that to LRFN4. Also interacts with LRFN3. Forms homomeric complexes, but not across cell junctions. Interacts with DLG1, DLG2 and DLG4, but not with MAGI2, not CASK. Interacts with DLG3. Interacts with 2 AMPA receptor subunits GRIA1 and GRIA2 and NMDA receptor subunit GRIN1. Post-translationally, glycosylated. Mainly expressed in brain (at protein level) and testis. In brain, found in cerebral cortex (including pyramidal neurons), hippocampus (including CA3 and CA1 neurons), dentate gyrus, cerebellum (including Purkinje neurons) (at protein level) (at protein level). Also expressed in the olfactory bulb.

It localises to the membrane. The protein localises to the synapse. The protein resides in the postsynaptic density membrane. Functionally, promotes neurite outgrowth in hippocampal neurons. Involved in the regulation of the differentiation and maintenance of excitatory synapses. Induces the clustering of excitatory postsynaptic proteins, including DLG4, DLGAP1, GRIA1 and GRIN1. In Rattus norvegicus (Rat), this protein is Leucine-rich repeat and fibronectin type III domain-containing protein 1 (Lrfn1).